The following is a 795-amino-acid chain: Phenylalanine--tRNA ligase beta subunit (795 aa).

In terms of domain architecture, tRNA-binding spans 39–148 (AGRFTGVVVG…AEAPIGQDIR (110 aa)). A B5 domain is found at 401-476 (PQPATITLRR…RVYGYDAIPN (76 aa)). Mg(2+) is bound by residues Asp-454, Asp-460, Glu-463, and Glu-464. An FDX-ACB domain is found at 701 to 794 (SRFPANRRDI…LKQRFQASLR (94 aa)).

This sequence belongs to the phenylalanyl-tRNA synthetase beta subunit family. Type 1 subfamily. As to quaternary structure, tetramer of two alpha and two beta subunits. Mg(2+) is required as a cofactor.

The protein localises to the cytoplasm. It catalyses the reaction tRNA(Phe) + L-phenylalanine + ATP = L-phenylalanyl-tRNA(Phe) + AMP + diphosphate + H(+). The polypeptide is Phenylalanine--tRNA ligase beta subunit (Sodalis glossinidius (strain morsitans)).